We begin with the raw amino-acid sequence, 396 residues long: Putative F-box/kelch-repeat protein At4g11770 (396 aa).

An F-box domain is found at 9-55; the sequence is PCNMPYLPDDLLLNILGRVSRLYYPILSLVSKRFRSLVGSLELYKIR. Kelch repeat units follow at residues 151-197, 198-248, and 250-296; these read YIYM…VLDG, KIYV…YEEK, and YLFG…VFYK.

This Arabidopsis thaliana (Mouse-ear cress) protein is Putative F-box/kelch-repeat protein At4g11770.